The primary structure comprises 310 residues: Tagatose-6-phosphate kinase (310 aa).

The protein belongs to the carbohydrate kinase PfkB family. LacC subfamily.

It carries out the reaction D-tagatofuranose 6-phosphate + ATP = D-tagatofuranose 1,6-bisphosphate + ADP + H(+). The protein operates within carbohydrate metabolism; D-tagatose 6-phosphate degradation; D-glyceraldehyde 3-phosphate and glycerone phosphate from D-tagatose 6-phosphate: step 1/2. The chain is Tagatose-6-phosphate kinase from Streptococcus agalactiae serotype V (strain ATCC BAA-611 / 2603 V/R).